The following is a 125-amino-acid chain: Small ribosomal subunit protein uS13 (125 aa).

Residues 92–125 are disordered; sequence RRSLPVRGQRTQTNARTRKGKRKTVAGKKKATKK. The segment covering 107–125 has biased composition (basic residues); the sequence is RTRKGKRKTVAGKKKATKK.

Belongs to the universal ribosomal protein uS13 family. Part of the 30S ribosomal subunit. Forms a loose heterodimer with protein S19. Forms two bridges to the 50S subunit in the 70S ribosome.

Its function is as follows. Located at the top of the head of the 30S subunit, it contacts several helices of the 16S rRNA. In the 70S ribosome it contacts the 23S rRNA (bridge B1a) and protein L5 of the 50S subunit (bridge B1b), connecting the 2 subunits; these bridges are implicated in subunit movement. Contacts the tRNAs in the A and P-sites. The polypeptide is Small ribosomal subunit protein uS13 (Chlorobium phaeobacteroides (strain DSM 266 / SMG 266 / 2430)).